Consider the following 499-residue polypeptide: uncharacterized protein (499 aa).

Disordered regions lie at residues 76–118 and 208–268; these read QATA…RLSP and DFET…DWAN. Positions 87 to 104 are enriched in basic and acidic residues; it reads DPEKQTGKSRYHPSEEIR. Acidic residues predominate over residues 208–263; the sequence is DFETEDDESGDDDSEDTGEDEDEEEWVAILEDEDEDDDDDDDDDEDDDDSDSDESL. Position 355 is a phosphoserine (Ser-355). Residues 478–499 form a disordered region; that stretch reads AEGQIRKLLFPKTNQSTQPKPK. Residues 489–499 show a composition bias toward polar residues; sequence KTNQSTQPKPK.

This is an uncharacterized protein from Arabidopsis thaliana (Mouse-ear cress).